The following is a 393-amino-acid chain: Methylthioribose kinase (393 aa).

Residues N38, K53, and 107-109 each bind ATP; that span reads EDL. Position 225 (D225) interacts with substrate. Residue 242-244 participates in ATP binding; sequence DPE. R332 is a substrate binding site.

It belongs to the methylthioribose kinase family. As to quaternary structure, homodimer.

The catalysed reaction is 5-(methylsulfanyl)-D-ribose + ATP = 5-(methylsulfanyl)-alpha-D-ribose 1-phosphate + ADP + H(+). It functions in the pathway amino-acid biosynthesis; L-methionine biosynthesis via salvage pathway; S-methyl-5-thio-alpha-D-ribose 1-phosphate from S-methyl-5'-thioadenosine (hydrolase route): step 2/2. In terms of biological role, catalyzes the phosphorylation of methylthioribose into methylthioribose-1-phosphate. The sequence is that of Methylthioribose kinase from Bacillus cereus (strain AH187).